Here is a 444-residue protein sequence, read N- to C-terminus: Deoxyguanosinetriphosphate triphosphohydrolase-like protein (444 aa).

One can recognise an HD domain in the interval 66-259 (RLTHSLEAAQ…MELADDIAYG (194 aa)).

This sequence belongs to the dGTPase family. Type 2 subfamily.

This Vibrio campbellii (strain ATCC BAA-1116) protein is Deoxyguanosinetriphosphate triphosphohydrolase-like protein.